We begin with the raw amino-acid sequence, 476 residues long: Calcium uptake protein 1, mitochondrial (476 aa).

Residues 1–33 (MFRLNSLSALAELAVGSRWYHGGSQPIQIRRRL) constitute a mitochondrion transit peptide. The segment at 68–106 (SDIGDKGKNKDEGDVCNHEKKTADLAPHPEEKKKKRSGF) is disordered. A polybasic region region spans residues 99–110 (KKKKRSGFRDRK). Ser122 carries the phosphoserine modification. A k/R-ring region spans residues 126-129 (KIFR). The region spanning 218 to 253 (TPQRNFEIAFKMFDLNGDGEVDMEEFEQVQSIIRSQ) is the EF-hand 1 domain. 5 residues coordinate Ca(2+): Asp231, Asn233, Asp235, Glu237, and Glu242. The segment at 259-263 (RHRDR) is k/R-ring. The EF-hand 2 domain occupies 408-443 (LSDHVCDVVFALFDCDGNGELSNKEFVSIMKQRLMR). Ca(2+) contacts are provided by Asp421, Asp423, Asn425, Glu427, and Glu432. Arg455 is modified (asymmetric dimethylarginine). The tract at residues 455 to 465 (RLMQAMWKCAQ) is C-helix region.

Belongs to the MICU1 family. MICU1 subfamily. As to quaternary structure, heterodimer; disulfide-linked; heterodimerizes with MICU2 or MICU3. Homodimer; disulfide-linked. Component of the uniplex complex, composed of MCU, EMRE/SMDT1, MICU1 and MICU2 (or MICU3) in a 4:4:1:1 stoichiometry. The composition of calcium sensors within the uniplex complex can differ depending on tissues: a MICU1 homodimer can be present instead of the MICU1-MICU2 heterodimer in skeletal-muscle and kidney. MICU1 is recruited to the uniplex complex by EMRE/SMDT1, and it associates with MCU at low calcium levels, occluding the pore of the MCU channel. Associates with the MICOS complex. Interacts with SLC25A23. Interacts with CHCHD4/MIA40; which introduces the interchain disulfide bond with MICU2. Interacts (when methylated) with UCP2; leading to decrease the calcium sensitivity of MICU1. Phosphorylation at Ser-122 by AKT1 impairs its maturation and stability. Post-translationally, asymmetric dimethylation at Arg-455 by PRMT1 decreases the calcium sensitivity of MICU1 by promoting interaction with UCP2. In terms of processing, degraded by YME1L1 when not complexed as homodimer or heterodimer. Not degraded when complexed as homodimer or heterodimer; the presence of the interchain disulfide bond protecting MICU1 from degradation by YME1L1. As to expression, expressed in epithelial cell lines. Strongly expressed in epidermal keratinocytes and dermal endothelial cells.

The protein resides in the mitochondrion intermembrane space. The protein localises to the mitochondrion inner membrane. Activated by spermine, kaempferol and SB202190, which bind MICU1 and prevent MCU pore occlusion in absence of calcium. In terms of biological role, calcium sensor of the mitochondrial calcium uniporter (MCU) channel, which senses calcium level via its EF-hand domains. MICU1 and MICU2 (or MICU3) form a disulfide-linked heterodimer that stimulates and inhibits MCU activity, depending on the concentration of calcium. At low calcium levels, MICU1 occludes the pore of the MCU channel, preventing mitochondrial calcium uptake. At higher calcium levels, calcium-binding to MICU1 and MICU2 (or MICU3) induces a conformational change that weakens MCU-MICU1 interactions and moves the MICU1-MICU2 heterodimer away from the pore, allowing calcium permeation through the MCU channel. Also required to protect against manganese toxicity by preventing manganese uptake by MCU: mechanistically, manganese-binding to its EF-hand domains does not induce any conformational change, maintaining MCU pore occlusion. Also acts as a barrier for inhibitors of the MCU channel, such as ruthenium red or its derivative Ru360. Acts as a regulator of mitochondrial cristae structure independently of its ability to regulate the mitochondrial calcium uniporter channel. Regulates glucose-dependent insulin secretion in pancreatic beta-cells by regulating mitochondrial calcium uptake. Induces T-helper 1-mediated autoreactivity, which is accompanied by the release of IFNG. Its function is as follows. Isoform that regulates mitochondrial calcium uniporter (MCU) in the skeletal muscle. Compared to other isoforms, this isoform has higher affinity for calcium, promoting mitochondrial calcium uptake at lower calcium concentrations. This allows a rapid response of mitochondrial metabolism and ensures sustained ATP production needed for resistance and strenuous exercise. The sequence is that of Calcium uptake protein 1, mitochondrial from Homo sapiens (Human).